Reading from the N-terminus, the 476-residue chain is Doublesex- and mab-3-related transcription factor 3 (476 aa).

The DM DNA-binding region spans 29–76 (CARCRNHGVLSWLKGHKRYCRFKDCTCEKCILIIERQRVMAAQVALRR). Disordered regions lie at residues 89-130 (DSLR…RPTA) and 147-195 (GTLP…SKNC). Over residues 102–121 (DAAATAATASQSSPASQASQ) the composition is skewed to low complexity. The segment covering 165–174 (DSSSTDNTAE) has biased composition (polar residues). Basic and acidic residues predominate over residues 176 to 185 (FSDKDTDQRS). The region spanning 255 to 290 (RPPLEVLKKIFPNQKPTVLELILKGCGGDLVSAVEV) is the DMA domain. Residues 418 to 432 (NSTSVFRSSPVLSSR) show a composition bias toward polar residues. The disordered stretch occupies residues 418 to 476 (NSTSVFRSSPVLSSRTTEDPRISIPDDGCPIVTKQSIYTEDDYDERSDSSDSRILNTSS).

The protein belongs to the DMRT family. As to expression, expressed in the ventral spinal cord, in a restrical population of neurons migrating ventrically in the developing spinal cord at 11.5 dpc.

Its subcellular location is the nucleus. In terms of biological role, probable transcription factor that plays a role in configuring the spinal circuits controlling stride in vertebrates. Involved in neuronal specification within specific subdivision of spinal cord neurons and in the development of a coordinated locomotor network controlling limb movements. May regulate transcription during sexual development. The protein is Doublesex- and mab-3-related transcription factor 3 (Dmrt3) of Mus musculus (Mouse).